The chain runs to 188 residues: Pyridoxal 5'-phosphate synthase subunit PdxT (188 aa).

Residue 46 to 48 (GES) coordinates L-glutamine. Cysteine 78 serves as the catalytic Nucleophile. Residues arginine 105 and 133 to 134 (IR) each bind L-glutamine. Residues histidine 169 and glutamate 171 each act as charge relay system in the active site.

It belongs to the glutaminase PdxT/SNO family. In terms of assembly, in the presence of PdxS, forms a dodecamer of heterodimers. Only shows activity in the heterodimer.

It catalyses the reaction aldehydo-D-ribose 5-phosphate + D-glyceraldehyde 3-phosphate + L-glutamine = pyridoxal 5'-phosphate + L-glutamate + phosphate + 3 H2O + H(+). It carries out the reaction L-glutamine + H2O = L-glutamate + NH4(+). It functions in the pathway cofactor biosynthesis; pyridoxal 5'-phosphate biosynthesis. Catalyzes the hydrolysis of glutamine to glutamate and ammonia as part of the biosynthesis of pyridoxal 5'-phosphate. The resulting ammonia molecule is channeled to the active site of PdxS. In Thermosipho africanus (strain TCF52B), this protein is Pyridoxal 5'-phosphate synthase subunit PdxT.